The chain runs to 345 residues: Anthranilate phosphoribosyltransferase 1 (345 aa).

Residues glycine 86, 89-90 (GD), threonine 94, 96-99 (NIST), 114-122 (KHGGRGVSS), and serine 126 each bind 5-phospho-alpha-D-ribose 1-diphosphate. Glycine 86 lines the anthranilate pocket. Serine 98 is a binding site for Mg(2+). Residue arginine 172 participates in anthranilate binding. Mg(2+)-binding residues include aspartate 231 and glutamate 232.

The protein belongs to the anthranilate phosphoribosyltransferase family. As to quaternary structure, homodimer. The cofactor is Mg(2+).

It carries out the reaction N-(5-phospho-beta-D-ribosyl)anthranilate + diphosphate = 5-phospho-alpha-D-ribose 1-diphosphate + anthranilate. It participates in amino-acid biosynthesis; L-tryptophan biosynthesis; L-tryptophan from chorismate: step 2/5. Its function is as follows. Catalyzes the transfer of the phosphoribosyl group of 5-phosphorylribose-1-pyrophosphate (PRPP) to anthranilate to yield N-(5'-phosphoribosyl)-anthranilate (PRA). The sequence is that of Anthranilate phosphoribosyltransferase 1 from Ralstonia nicotianae (strain ATCC BAA-1114 / GMI1000) (Ralstonia solanacearum).